A 337-amino-acid polypeptide reads, in one-letter code: Protein-glutamate methylesterase/protein-glutamine glutaminase of group 3 operon (337 aa).

One can recognise a Response regulatory domain in the interval 2–119 (KIAIVNDMPL…GDAREAAAPL (118 aa)). Asp53 carries the post-translational modification 4-aspartylphosphate. The region spanning 144–337 (PLREASQRRG…AGRLTEFFAK (194 aa)) is the CheB-type methylesterase domain. Catalysis depends on residues Ser160, His187, and Asp280.

This sequence belongs to the CheB family. Phosphorylated by CheA. Phosphorylation of the N-terminal regulatory domain activates the methylesterase activity.

It localises to the cytoplasm. It catalyses the reaction [protein]-L-glutamate 5-O-methyl ester + H2O = L-glutamyl-[protein] + methanol + H(+). The enzyme catalyses L-glutaminyl-[protein] + H2O = L-glutamyl-[protein] + NH4(+). Functionally, involved in chemotaxis. Part of a chemotaxis signal transduction system that modulates chemotaxis in response to various stimuli. Catalyzes the demethylation of specific methylglutamate residues introduced into the chemoreceptors (methyl-accepting chemotaxis proteins or MCP) by CheR. Also mediates the irreversible deamidation of specific glutamine residues to glutamic acid. The chain is Protein-glutamate methylesterase/protein-glutamine glutaminase of group 3 operon from Pseudomonas putida (strain ATCC 47054 / DSM 6125 / CFBP 8728 / NCIMB 11950 / KT2440).